We begin with the raw amino-acid sequence, 175 residues long: Putative transmembrane protein ORF175 (175 aa).

Transmembrane regions (helical) follow at residues 14–34 (LGIVYGSTLIILLLPLIGSFM), 58–78 (VLSNFGIFGGLALGVGSAIAF), 101–121 (IVVALLVSQFIFGGWATFALF), and 142–162 (ITPFIDGLIATLGGLMVVLSI).

Its subcellular location is the host membrane. This chain is Putative transmembrane protein ORF175, found in Acidianus two-tailed virus (ATV).